Consider the following 174-residue polypeptide: MIAQNHFKKIAISSTGIRRGVEDFLNQKYFADKFTEEEQGCFVLFLAYKIFRYGNKVCLKYFSEQQPELITKIFDDYPHLFFRREAINICIKNKDGRQKALDAIKLKSSNKFFKDCFDTVFPKVDVVVNLIFEEEPKPKHVPNEPELVFNLELIPLNIDENDDVLPTSNVENNH.

This is an uncharacterized protein from Rickettsia conorii (strain ATCC VR-613 / Malish 7).